We begin with the raw amino-acid sequence, 593 residues long: MLPAHKQTLEALLADSVKQVAHALKGADAAFVAPAITLERPKVAAHGDVACNVAMQLAKPLGTNPRQLAEQIVAALTAQPAAQGLVEAAEIAGPGFINLRLSAAAKQAVIAAVFEQGRAFGTSDREKGKQVLLEFVSANPTGPLHVGHGRQAALGDVLANVIASQGYAVHREFYYNDAGVQIGNLAISTQARARGLKPGDAGWPEAAYNGEYIADIARDYLNGETVAASDGEPVKGTGDVEDLDAIRKFAVTYLRREQDMDLQAFGVKFDQYYLESSLYSEGRVEKTVDALVKAGMTYEQDGALWLRTTDEGDDKDRVMRKSDGTYTYFVPDVAYHVTKWERGFTKVINIQGSDHHGTIARVRAGLQGLHIGIPKGYPDYVLHKMVTVMRDGQEVKISKRAGSYVTVRDLIEWSGGAAAGQEAAPDLIDEATITRGRDAVRFFLISRKADTEFVFDIDLALKQNDENPVYYVQYAHARICSVLNELKSRYNVDVAQLPGADLSQLTSAQAASLMQKLAEYPDMLTHAANELAPHAVAFYLRDLAGEFHSFYNAERVLVDDEAPRNARAALLAATRQVLENGLAVLGVSAPAKM.

Residues 138–148 (ANPTGPLHVGH) carry the 'HIGH' region motif.

It belongs to the class-I aminoacyl-tRNA synthetase family. In terms of assembly, monomer.

Its subcellular location is the cytoplasm. It catalyses the reaction tRNA(Arg) + L-arginine + ATP = L-arginyl-tRNA(Arg) + AMP + diphosphate. The protein is Arginine--tRNA ligase of Burkholderia orbicola (strain MC0-3).